The following is a 99-amino-acid chain: Putative membrane protein insertion efficiency factor (99 aa).

It belongs to the UPF0161 family.

It localises to the cell membrane. In terms of biological role, could be involved in insertion of integral membrane proteins into the membrane. The polypeptide is Putative membrane protein insertion efficiency factor (Corynebacterium efficiens (strain DSM 44549 / YS-314 / AJ 12310 / JCM 11189 / NBRC 100395)).